Consider the following 341-residue polypeptide: tRNA N6-adenosine threonylcarbamoyltransferase (341 aa).

Residues His114 and His118 each coordinate Fe cation. Substrate contacts are provided by residues 136-140, Asp169, Gly182, Asp186, and Asn278; that span reads LVSGG. Asp304 serves as a coordination point for Fe cation.

The protein belongs to the KAE1 / TsaD family. Requires Fe(2+) as cofactor.

The protein localises to the cytoplasm. It catalyses the reaction L-threonylcarbamoyladenylate + adenosine(37) in tRNA = N(6)-L-threonylcarbamoyladenosine(37) in tRNA + AMP + H(+). In terms of biological role, required for the formation of a threonylcarbamoyl group on adenosine at position 37 (t(6)A37) in tRNAs that read codons beginning with adenine. Is involved in the transfer of the threonylcarbamoyl moiety of threonylcarbamoyl-AMP (TC-AMP) to the N6 group of A37, together with TsaE and TsaB. TsaD likely plays a direct catalytic role in this reaction. This Lactococcus lactis subsp. cremoris (strain MG1363) protein is tRNA N6-adenosine threonylcarbamoyltransferase.